The sequence spans 462 residues: MDLLRNIPDELICHILSFLTTKEAALTSVLSKRWRNLLAFVSNLHIDDSIFLHPEEGKRDRNEIRQSFLDFVGRILALQGNCPVKKVSIKFLFKLDSDRVDGWISNVLARGVSELDLSIDLCMDEYFLLSSKRFESKNLVRLKLHRLCIGQREKTVGWLAGEIFLPMLKTLELDYVGFYGDLLFLRALPALEELVIVDAFWFTTFTDVTVSNPSLKTLTMSSNIYSGSISFDTPSLVYFSHFKYVAKDYPLVNMENLLEARINLGVTEGQIRRAREPNNNDEVVLRFPNVGKLMNGIRNVQCLDLSANTLEMLSLSCESMPVFKNLKSLSIKSAENRGWQAMPVLLRNCPHLETLVLEGLLHFVTDKCGDACDCVSREEKGRSLTSCPVKTLEIKEFHGTMEEMYMITHFLDYFPCLKELKIYIEGNDHAQREVSEVIAEKIKLYNKSSSSNVQLMVSGYHE.

The F-box domain maps to 1–47; that stretch reads MDLLRNIPDELICHILSFLTTKEAALTSVLSKRWRNLLAFVSNLHID. 5 LRR repeats span residues 118–146, 148–175, 197–222, 302–333, and 334–359; these read SIDL…KLHR, CIGQ…ELDY, VDAF…TMSS, CLDL…SIKS, and AENR…VLEG.

The sequence is that of F-box/LRR-repeat protein At5g38396 from Arabidopsis thaliana (Mouse-ear cress).